The primary structure comprises 446 residues: Exodeoxyribonuclease 7 large subunit (446 aa).

It belongs to the XseA family. As to quaternary structure, heterooligomer composed of large and small subunits.

The protein localises to the cytoplasm. The catalysed reaction is Exonucleolytic cleavage in either 5'- to 3'- or 3'- to 5'-direction to yield nucleoside 5'-phosphates.. Functionally, bidirectionally degrades single-stranded DNA into large acid-insoluble oligonucleotides, which are then degraded further into small acid-soluble oligonucleotides. The sequence is that of Exodeoxyribonuclease 7 large subunit from Streptococcus pneumoniae (strain Hungary19A-6).